The primary structure comprises 200 residues: Pyridoxamine 5'-phosphate oxidase homolog (200 aa).

Residues phenylalanine 60, lysine 68, and asparagine 125 each coordinate FMN.

Belongs to the pyridoxamine 5'-phosphate oxidase family. The cofactor is FMN.

The protein localises to the cytoplasm. Its subcellular location is the nucleus. The protein is Pyridoxamine 5'-phosphate oxidase homolog of Saccharomyces cerevisiae (strain ATCC 204508 / S288c) (Baker's yeast).